The chain runs to 722 residues: Putative tyrosine-protein kinase in cps region (722 aa).

Transmembrane regions (helical) follow at residues isoleucine 31–isoleucine 53 and isoleucine 427–leucine 449.

The protein belongs to the etk/wzc family. In terms of processing, autophosphorylated on tyrosine residue(s).

Its subcellular location is the cell inner membrane. It carries out the reaction L-tyrosyl-[protein] + ATP = O-phospho-L-tyrosyl-[protein] + ADP + H(+). It participates in glycan metabolism; exopolysaccharide biosynthesis. This chain is Putative tyrosine-protein kinase in cps region, found in Klebsiella pneumoniae.